A 378-amino-acid polypeptide reads, in one-letter code: Chorismate synthase (378 aa).

Arg-49 is an NADP(+) binding site. FMN contacts are provided by residues 126-128 (RAS), Gly-287, 302-306 (KPTAT), and Arg-328.

Belongs to the chorismate synthase family. In terms of assembly, homotetramer. Requires FMNH2 as cofactor.

The catalysed reaction is 5-O-(1-carboxyvinyl)-3-phosphoshikimate = chorismate + phosphate. Its pathway is metabolic intermediate biosynthesis; chorismate biosynthesis; chorismate from D-erythrose 4-phosphate and phosphoenolpyruvate: step 7/7. Catalyzes the anti-1,4-elimination of the C-3 phosphate and the C-6 proR hydrogen from 5-enolpyruvylshikimate-3-phosphate (EPSP) to yield chorismate, which is the branch point compound that serves as the starting substrate for the three terminal pathways of aromatic amino acid biosynthesis. This reaction introduces a second double bond into the aromatic ring system. The chain is Chorismate synthase from Synechococcus sp. (strain JA-3-3Ab) (Cyanobacteria bacterium Yellowstone A-Prime).